Here is a 749-residue protein sequence, read N- to C-terminus: Cytosolic phospholipase A2 (749 aa).

Residues methionine 1–serine 178 form a phospholipid binding region. Residue serine 2 is modified to Phosphoserine. Residues proline 6–phenylalanine 122 enclose the C2 domain. Ca(2+)-binding residues include aspartate 40, threonine 41, aspartate 43, asparagine 65, aspartate 93, alanine 94, and asparagine 95. A PLA2c domain is found at serine 140 to asparagine 740. Serine 228 serves as the catalytic Nucleophile. Threonine 268 carries the phosphothreonine modification. Residues glycine 409 to glutamine 457 form a disordered region. A phosphoserine mark is found at serine 434, serine 435, and serine 437. Serine 505 carries the phosphoserine; by MAPK modification. Position 515 is a phosphoserine (serine 515). A Glycyl lysine isopeptide (Lys-Gly) (interchain with G-Cter in SUMO2) cross-link involves residue lysine 541. Aspartate 549 serves as the catalytic Proton acceptor. A Glycyl lysine isopeptide (Lys-Gly) (interchain with G-Cter in SUMO2) cross-link involves residue lysine 606. Serine 727 and serine 729 each carry phosphoserine.

As to quaternary structure, interacts with KAT5. Phosphorylated at both Ser-505 and Ser-727 in response to mitogenic stimuli. In terms of tissue distribution, expressed in various cells and tissues such as macrophages, neutrophils, fibroblasts and lung endothelium. Expressed in platelets (at protein level).

It localises to the cytoplasm. Its subcellular location is the golgi apparatus membrane. It is found in the nucleus envelope. The enzyme catalyses a 1,2-diacyl-sn-glycero-3-phosphocholine + H2O = a 1-acyl-sn-glycero-3-phosphocholine + a fatty acid + H(+). It catalyses the reaction a 1-O-alkyl-2-acyl-sn-glycero-3-phosphocholine + H2O = a 1-O-alkyl-sn-glycero-3-phosphocholine + a fatty acid + H(+). It carries out the reaction a 1-acyl-sn-glycero-3-phosphocholine + H2O = sn-glycerol 3-phosphocholine + a fatty acid + H(+). The catalysed reaction is 1-hexadecanoyl-2-(5Z,8Z,11Z,14Z-eicosatetraenoyl)-sn-glycero-3-phosphocholine + H2O = 1-hexadecanoyl-sn-glycero-3-phosphocholine + (5Z,8Z,11Z,14Z)-eicosatetraenoate + H(+). The enzyme catalyses 1,2-di-(5Z,8Z,11Z,14Z-eicosatetraenoyl)-sn-glycero-3-phosphocholine + H2O = 1-(5Z,8Z,11Z,14Z-eicosatetraenoyl)-sn-glycero-3-phosphocholine + (5Z,8Z,11Z,14Z)-eicosatetraenoate + H(+). It catalyses the reaction 1-octadecanoyl-2-(5Z,8Z,11Z,14Z-eicosatetraenoyl)-sn-glycero-3-phosphocholine + H2O = 1-octadecanoyl-sn-glycero-3-phosphocholine + (5Z,8Z,11Z,14Z)-eicosatetraenoate + H(+). It carries out the reaction 1-hexadecanoyl-2-(9Z,12Z-octadecadienoyl)-sn-glycero-3-phosphocholine + H2O = (9Z,12Z)-octadecadienoate + 1-hexadecanoyl-sn-glycero-3-phosphocholine + H(+). The catalysed reaction is 1-octadecanoyl-2-(9Z,12Z,15Z-octadecatrienoyl)-sn-glycero-3-phosphocholine + H2O = (9Z,12Z,15Z)-octadecatrienoate + 1-octadecanoyl-sn-glycero-3-phosphocholine + H(+). The enzyme catalyses 1-(5Z,8Z,11Z,14Z-eicosatetraenoyl)-2-hexadecanoyl-sn-glycero-3-phosphocholine + H2O = 1-(5Z,8Z,11Z,14Z-eicosatetraenoyl)-sn-glycero-3-phosphocholine + hexadecanoate + H(+). It catalyses the reaction 1-O-hexadecyl-2-(5Z,8Z,11Z,14Z)-eicosatetraenoyl-sn-glycero-3-phosphocholine + H2O = 1-O-hexadecyl-sn-glycero-3-phosphocholine + (5Z,8Z,11Z,14Z)-eicosatetraenoate + H(+). It carries out the reaction 1,2-di-(9Z-octadecenoyl)-sn-glycero-3-phospho-(1'-sn-glycerol) + H2O = 1-(9Z-octadecenoyl)-sn-glycero-3-phospho-(1'-sn-glycerol) + (9Z)-octadecenoate + H(+). The catalysed reaction is 1-octadecanoyl-2-(5Z,8Z,11Z,14Z-eicosatetraenoyl)-sn-glycero-3-phosphate + H2O = 1-octadecanoyl-sn-glycero-3-phosphate + (5Z,8Z,11Z,14Z)-eicosatetraenoate + H(+). The enzyme catalyses 1-hexadecanoyl-sn-glycero-3-phosphocholine + H2O = sn-glycerol 3-phosphocholine + hexadecanoate + H(+). It catalyses the reaction 2-(prostaglandin E2)-sn-glycero-3-phosphoethanolamine + H2O = sn-glycero-3-phosphoethanolamine + prostaglandin E2 + H(+). It carries out the reaction 2-[(15S)-hydroxy-(5Z,8Z,11Z,13E)-eicosatetraenoyl]-sn-glycero-3-phosphocholine + H2O = (15S)-hydroxy-(5Z,8Z,11Z,13E)-eicosatetraenoate + sn-glycerol 3-phosphocholine + H(+). The catalysed reaction is 2-[(15R)-hydroxy-(5Z,8Z,11Z,13E)-eicosatetraenoyl]-sn-glycero-3-phosphocholine + H2O = (15R)-hydroxy-(5Z,8Z,11Z,13E)-eicosatetraenoate + sn-glycerol 3-phosphocholine + H(+). The enzyme catalyses 2-(prostaglandin E2)-sn-glycero-3-phosphocholine + H2O = prostaglandin E2 + sn-glycerol 3-phosphocholine + H(+). It catalyses the reaction 2-[(11R)-hydroxy-(5Z,8Z,12E,14Z)-eicosatetraenoyl]-sn-glycero-3-phosphocholine + H2O = (11R)-hydroxy-(5Z,8Z,12E,14Z)-eicosatetraenoate + sn-glycerol 3-phosphocholine + H(+). It carries out the reaction 1-(5Z,8Z,11Z,14Z-eicosatetraenoyl)-2-O-hexadecyl-sn-glycero-3-phosphocholine + H2O = 2-O-hexadecyl-sn-glycero-3-phosphocholine + (5Z,8Z,11Z,14Z)-eicosatetraenoate + H(+). The catalysed reaction is 1-octadecanoyl-2-(5Z,8Z,11Z,14Z-eicosatetraenoyl)-sn-glycero-3-phosphocholine + glycerol = 1-(5Z,8Z,11Z,14Z-eicosatetraenoyl)-glycerol + 1-octadecanoyl-sn-glycero-3-phosphocholine. The enzyme catalyses 1-octadecanoyl-2-(9Z,12Z,15Z-octadecatrienoyl)-sn-glycero-3-phosphocholine + glycerol = 1-(9Z,12Z,15Z-octadecatrienoyl)-glycerol + 1-octadecanoyl-sn-glycero-3-phosphocholine. It participates in membrane lipid metabolism; glycerophospholipid metabolism. Its pathway is lipid metabolism; arachidonate metabolism. The protein operates within lipid metabolism; prostaglandin biosynthesis. It functions in the pathway lipid metabolism; leukotriene B4 biosynthesis. With respect to regulation, activated by cytosolic calcium, which is necessary for binding to membrane lipids. Activated by phosphorylation in response to mitogenic stimuli. Activated by ceramide-1-phosphate. Binding (via C2 domain) to ceramide-1-phosphate increases the affinity for membrane lipids. Can be activated by phosphoinositides in the absence of calcium. Inhibited by ANXA5 in a calcium- and substrate-dependent way. In terms of biological role, has primarily calcium-dependent phospholipase and lysophospholipase activities, with a major role in membrane lipid remodeling and biosynthesis of lipid mediators of the inflammatory response. Plays an important role in embryo implantation and parturition through its ability to trigger prostanoid production. Preferentially hydrolyzes the ester bond of the fatty acyl group attached at sn-2 position of phospholipids (phospholipase A2 activity). Selectively hydrolyzes sn-2 arachidonoyl group from membrane phospholipids, providing the precursor for eicosanoid biosynthesis via the cyclooxygenase pathway. In an alternative pathway of eicosanoid biosynthesis, hydrolyzes sn-2 fatty acyl chain of eicosanoid lysophopholipids to release free bioactive eicosanoids. Hydrolyzes the ester bond of the fatty acyl group attached at sn-1 position of phospholipids (phospholipase A1 activity) only if an ether linkage rather than an ester linkage is present at the sn-2 position. This hydrolysis is not stereospecific. Has calcium-independent phospholipase A2 and lysophospholipase activities in the presence of phosphoinositides. Has O-acyltransferase activity. Catalyzes the transfer of fatty acyl chains from phospholipids to a primary hydroxyl group of glycerol (sn-1 or sn-3), potentially contributing to monoacylglycerol synthesis. In Homo sapiens (Human), this protein is Cytosolic phospholipase A2 (PLA2G4A).